A 362-amino-acid chain; its full sequence is Protein OCA4 (362 aa).

Functionally, required for replication of Brome mosaic virus (BMV). This is Protein OCA4 (OCA4) from Saccharomyces cerevisiae (strain ATCC 204508 / S288c) (Baker's yeast).